Consider the following 188-residue polypeptide: Elongation factor P (188 aa).

N6-(3,6-diaminohexanoyl)-5-hydroxylysine is present on K34.

Belongs to the elongation factor P family. Post-translationally, may be beta-lysylated on the epsilon-amino group of Lys-34 by the combined action of EpmA and EpmB, and then hydroxylated on the C5 position of the same residue by EpmC (if this protein is present). Lysylation is critical for the stimulatory effect of EF-P on peptide-bond formation. The lysylation moiety may extend toward the peptidyltransferase center and stabilize the terminal 3-CCA end of the tRNA. Hydroxylation of the C5 position on Lys-34 may allow additional potential stabilizing hydrogen-bond interactions with the P-tRNA.

The protein localises to the cytoplasm. It functions in the pathway protein biosynthesis; polypeptide chain elongation. In terms of biological role, involved in peptide bond synthesis. Alleviates ribosome stalling that occurs when 3 or more consecutive Pro residues or the sequence PPG is present in a protein, possibly by augmenting the peptidyl transferase activity of the ribosome. Modification of Lys-34 is required for alleviation. The chain is Elongation factor P from Stenotrophomonas maltophilia (strain R551-3).